The sequence spans 310 residues: uncharacterized protein (310 aa).

Residues 269 to 307 (DLAELERKKSLAEIHKKAAMAKKREEKKKIKQELKKSAK) are a coiled coil. Basic and acidic residues predominate over residues 290–304 (KKREEKKKIKQELKK). The segment at 290 to 310 (KKREEKKKIKQELKKSAKGKK) is disordered.

This is an uncharacterized protein from Magallana gigas (Pacific oyster).